The following is a 265-amino-acid chain: MKSWVIGNWKLNPTSLEQVQHLVTDLVEGVDAQTRSMDNCHLMLAPSFLHLSPVQQALNANSSTLKLAAQDVSALSAESGAYTGDVSAKQLKDMGVQWVIVGHSERRQYYKESNAVLLKKLLNSAEQGLGVILCIGESESDFEAGHTEQVLDEELQVIADFLQQLKPEQAGYAEQNLIIAYEPVWAIGTGKVPSVEQVTQIHRFIRQQLHSFDNKLDTTPVIYGGSVKPENAADFAASDQINGVLVGGAALQADSFLAIAKCFNN.

Position 8–10 (8–10 (NWK)) interacts with substrate. His-103 (electrophile) is an active-site residue. Glu-182 (proton acceptor) is an active-site residue. Substrate is bound by residues Gly-188, Ser-226, and 247–248 (GG).

Belongs to the triosephosphate isomerase family. Homodimer.

It is found in the cytoplasm. The catalysed reaction is D-glyceraldehyde 3-phosphate = dihydroxyacetone phosphate. It participates in carbohydrate biosynthesis; gluconeogenesis. The protein operates within carbohydrate degradation; glycolysis; D-glyceraldehyde 3-phosphate from glycerone phosphate: step 1/1. Its function is as follows. Involved in the gluconeogenesis. Catalyzes stereospecifically the conversion of dihydroxyacetone phosphate (DHAP) to D-glyceraldehyde-3-phosphate (G3P). This is Triosephosphate isomerase from Psychrobacter sp. (strain PRwf-1).